A 144-amino-acid chain; its full sequence is Snaclec 6 (144 aa).

Residues 1–23 form the signal peptide; sequence MGRFISVSFGLLVVFLSLSGTGA. Disulfide bonds link Cys25/Cys36, Cys53/Cys142, and Cys119/Cys134. The C-type lectin domain maps to 32 to 143; the sequence is HEGHCYKVFK…CNFIAPVVCK (112 aa).

It belongs to the snaclec family. Heterodimer; disulfide-linked.

Its subcellular location is the secreted. Interferes with one step of hemostasis (modulation of platelet aggregation, or coagulation cascade, for example). The protein is Snaclec 6 of Daboia siamensis (Eastern Russel's viper).